The chain runs to 268 residues: Undecaprenyl-diphosphatase (268 aa).

Transmembrane regions (helical) follow at residues 1–21 (MSLI…FLPI), 39–59 (QGPL…LVYF), 85–105 (ALLV…LVAF), 110–130 (ALRS…PLWL), 144–164 (MSFK…IPGA), 187–207 (FSML…LIEL), 221–241 (DGLI…AVLM), and 247–267 (IGFL…LVFF).

This sequence belongs to the UppP family.

Its subcellular location is the cell inner membrane. It carries out the reaction di-trans,octa-cis-undecaprenyl diphosphate + H2O = di-trans,octa-cis-undecaprenyl phosphate + phosphate + H(+). In terms of biological role, catalyzes the dephosphorylation of undecaprenyl diphosphate (UPP). Confers resistance to bacitracin. The polypeptide is Undecaprenyl-diphosphatase (Maricaulis maris (strain MCS10) (Caulobacter maris)).